The primary structure comprises 183 residues: Phospholipase A2 inhibitor gamma subunit A1 (183 aa).

Disulfide bonds link cysteine 3–cysteine 28, cysteine 6–cysteine 13, cysteine 21–cysteine 49, cysteine 55–cysteine 76, cysteine 77–cysteine 82, cysteine 100–cysteine 125, cysteine 118–cysteine 147, and cysteine 151–cysteine 173. Asparagine 158 carries N-linked (GlcNAc...) asparagine glycosylation.

This sequence belongs to the CNF-like-inhibitor family. As to quaternary structure, heterodimer of subunit A and subunit B. As to expression, expressed by the liver.

The protein localises to the secreted. In terms of biological role, phospholipase A2 (PA2) inhibitor. Inhibits the enzymatic activity of PA2 of Deinagkistrodon acutus. Also shows a wide anti-hemorrhage activities to D.acutus, Naja atra and Agkistrodon halys venom. The native protein is more potent than the recombinant one. The protein is Phospholipase A2 inhibitor gamma subunit A1 of Trimerodytes annularis (Red-bellied annulate keelback).